The sequence spans 566 residues: Lactase-like protein (566 aa).

A signal peptide spans Met1–Thr20. Residues Ala21–Glu540 are Extracellular-facing. N-linked (GlcNAc...) asparagine glycans are attached at residues Asn170 and Asn244. Residues Ile541–Leu561 form a helical membrane-spanning segment. Residues Leu562 to Gly566 are Cytoplasmic-facing.

Belongs to the glycosyl hydrolase 1 family. Klotho subfamily. In terms of assembly, may form dimers. As to expression, strongly expressed in the lens of the eye, where it localizes to the equatorial epithelium and outer layers of newly extending fiber cells (at protein level). May also be expressed in kidney and skin. However, another study suggests that expression is specific to eye and is minimal in other tissues.

Its subcellular location is the endoplasmic reticulum membrane. In terms of biological role, plays a role in formation of the lens suture in the eye, which is important for normal optical properties of the lens. In Mus musculus (Mouse), this protein is Lactase-like protein (Lctl).